The following is a 330-amino-acid chain: DNA-directed RNA polymerase subunit alpha (330 aa).

An alpha N-terminal domain (alpha-NTD) region spans residues 1-229 (MKNLKFIKPF…DHFNVLVELS (229 aa)). An alpha C-terminal domain (alpha-CTD) region spans residues 245-330 (AHNYVLDLEI…HSVEEDKDKH (86 aa)).

It belongs to the RNA polymerase alpha chain family. As to quaternary structure, homodimer. The RNAP catalytic core consists of 2 alpha, 1 beta, 1 beta' and 1 omega subunit. When a sigma factor is associated with the core the holoenzyme is formed, which can initiate transcription.

The catalysed reaction is RNA(n) + a ribonucleoside 5'-triphosphate = RNA(n+1) + diphosphate. DNA-dependent RNA polymerase catalyzes the transcription of DNA into RNA using the four ribonucleoside triphosphates as substrates. This is DNA-directed RNA polymerase subunit alpha from Aster yellows witches'-broom phytoplasma (strain AYWB).